Here is a 337-residue protein sequence, read N- to C-terminus: Putative 2-aminoethylphosphonate-binding periplasmic protein (337 aa).

An N-terminal signal peptide occupies residues 1–21 (MKLSRLALLSVFALASAPSWA).

It belongs to the bacterial solute-binding protein 1 family.

The protein resides in the periplasm. Functionally, probably part of the PhnSTUV complex (TC 3.A.1.11.5) involved in 2-aminoethylphosphonate import. The sequence is that of Putative 2-aminoethylphosphonate-binding periplasmic protein (phnS) from Salmonella typhi.